The following is a 95-amino-acid chain: Histone-like DNA-binding protein (95 aa).

The protein belongs to the bacterial histone-like protein family.

This chain is Histone-like DNA-binding protein, found in Rickettsia typhi (strain ATCC VR-144 / Wilmington).